The following is a 336-amino-acid chain: Isopentenyl-diphosphate delta-isomerase (336 aa).

5–6 (RK) serves as a coordination point for substrate. Residues 60 to 62 (AMT), S90, and N117 each bind FMN. Position 147 (Q147) interacts with substrate. E148 contributes to the Mg(2+) binding site. FMN is bound by residues K179, S204, T209, 253–255 (GVR), and 274–275 (SR).

Belongs to the IPP isomerase type 2 family. As to quaternary structure, homooctamer. Dimer of tetramers. Requires FMN as cofactor. The cofactor is NADPH. Mg(2+) is required as a cofactor.

The protein resides in the cytoplasm. It catalyses the reaction isopentenyl diphosphate = dimethylallyl diphosphate. Functionally, involved in the biosynthesis of isoprenoids. Catalyzes the 1,3-allylic rearrangement of the homoallylic substrate isopentenyl (IPP) to its allylic isomer, dimethylallyl diphosphate (DMAPP). This is Isopentenyl-diphosphate delta-isomerase from Streptococcus pneumoniae serotype 4 (strain ATCC BAA-334 / TIGR4).